Reading from the N-terminus, the 83-residue chain is Small ribosomal subunit protein bS16 (83 aa).

The protein belongs to the bacterial ribosomal protein bS16 family.

The chain is Small ribosomal subunit protein bS16 from Borrelia duttonii (strain Ly).